Reading from the N-terminus, the 1378-residue chain is MAQTVLGQKRFRKYYGKIREVLEMPNLIEVQKSSYDLFLKSGDQPQPMDGEGIMGVFQSVFPIKDFNETAVLEFVKYELEKPKYDVEECQQRDMTYSAPLKVTLRLIVFDVDEDTGAKSVKDIKEQDVFMGDMPLMTPNGTFIVNGTERVIVSQMHRSPGVFFDHDKGKTHSSGKLLFACRIIPYRGSWLDFEFDAKDLVFARIDRRRKLPVTTLLYSLGMDQQDIMDAYYDTVTYTHRKGEGWVTKFFPERIRGTRPTQDVVDAATGEVIAEAGKKVTPRAVKQLIDEGNVSEILVPFDGIIGKFAAKDIINEENGAIYVEAGDELTWEVDKDGAVTGGTLKELLDAGIEEIPVLDIDNITVGAYMRNTLAADKNMNRDTALMDIYRVMRPGEPPTVEAASALFDTLFFDSERYDLSAVGRVKMNMRLALDAEDTVRTLRKEDIVSCIKALVDLRDGRGDIDDIDHLGNRRVRSVGELMENQYRVGLLRMERAIKERMSSVEIDTVMPQDLINAKPAAAAVREFFGSSQLSQFMDQTNPLSEVTHKRRLSALGPGGLTRERAGFEVRDVHPTHYGRMCPIETPEGPNIGLINSLATFARVNKYGFIETPYRRVEDGKVTDEVNYMSATEEMRHTVAQANANLDESGSFVNEMVNTRQSGEYTLAPRESVDLIDVSPKQLVSVAASLIPFLENDDANRALMGSNMQRQAVPLLQADAPFVGTGIEGVVARDSGAAIMARRGGFIDQVDATRIVIRATEDLEPGDPGVDIYRLRKFQRSNQNTCINQRPLVKVGDKVGKDDVIADGPSTDLGELALGKNVVVAFMPWNGYNYEDSILISERVARDDVFTSIHIEEFEVAARDTKLGPEEITRDIPNVGEEALRNLDEAGIVYIGADVGPGDILVGKITPKGESPMTPEEKLLRAIFGEKASDVRDTSMRLPPGDFGTVVEVRVFNRHGVEKDERALQIEREEVESLARDRDDEMAILERNIYARLKDMILGKTAVKGPKGVKPGSEITEDLLGTLSRGQWWQLALEDEAEAQMVEALNQQYEAQKRALTARFEDKVEKVRRGDDLPPGVMKMVKVFIAVKRKLQPGDKMAGRHGNKGVISKVVPMEDMPFLADGTPVDFVLNPLGVPSRMNVGQILETHMGWAARGMGLKIDEALGEYRRSGDMTPVREAMRLAYGDEAYEEAISGLDQDDLLERAGNVTRGVPIATPVFDGAKEADVNDALTRAGFDTSGQSDLYDGRTGEKFARQVTVGVKYLLKLHHLVDDKIHARSTGPYSLVTQQPLGGKAQFGGQRFGEMEVWALEAYGAAYTLQEMLTVKSDDVAGRTKVYESIVKGEDNFEAGVPESFNVLVKEVRGLGLNMELLDAEGEE.

Belongs to the RNA polymerase beta chain family. In terms of assembly, the RNAP catalytic core consists of 2 alpha, 1 beta, 1 beta' and 1 omega subunit. When a sigma factor is associated with the core the holoenzyme is formed, which can initiate transcription.

It carries out the reaction RNA(n) + a ribonucleoside 5'-triphosphate = RNA(n+1) + diphosphate. Its function is as follows. DNA-dependent RNA polymerase catalyzes the transcription of DNA into RNA using the four ribonucleoside triphosphates as substrates. This Dinoroseobacter shibae (strain DSM 16493 / NCIMB 14021 / DFL 12) protein is DNA-directed RNA polymerase subunit beta.